The chain runs to 455 residues: Phosphomethylpyrimidine synthase (455 aa).

Residues asparagine 80, methionine 109, tyrosine 139, histidine 175, 195–197 (SRG), 236–239 (DSLR), and glutamate 275 contribute to the substrate site. A Zn(2+)-binding site is contributed by histidine 279. Tyrosine 302 serves as a coordination point for substrate. Residue histidine 343 participates in Zn(2+) binding. Positions 423, 426, and 431 each coordinate [4Fe-4S] cluster.

It belongs to the ThiC family. The cofactor is [4Fe-4S] cluster.

The enzyme catalyses 5-amino-1-(5-phospho-beta-D-ribosyl)imidazole + S-adenosyl-L-methionine = 4-amino-2-methyl-5-(phosphooxymethyl)pyrimidine + CO + 5'-deoxyadenosine + formate + L-methionine + 3 H(+). Its pathway is cofactor biosynthesis; thiamine diphosphate biosynthesis. In terms of biological role, catalyzes the synthesis of the hydroxymethylpyrimidine phosphate (HMP-P) moiety of thiamine from aminoimidazole ribotide (AIR) in a radical S-adenosyl-L-methionine (SAM)-dependent reaction. This chain is Phosphomethylpyrimidine synthase, found in Synechococcus sp. (strain JA-2-3B'a(2-13)) (Cyanobacteria bacterium Yellowstone B-Prime).